Reading from the N-terminus, the 131-residue chain is Small ribosomal subunit protein uS8 (131 aa).

The protein belongs to the universal ribosomal protein uS8 family. As to quaternary structure, part of the 30S ribosomal subunit. Contacts proteins S5 and S12.

Functionally, one of the primary rRNA binding proteins, it binds directly to 16S rRNA central domain where it helps coordinate assembly of the platform of the 30S subunit. The chain is Small ribosomal subunit protein uS8 from Acinetobacter baylyi (strain ATCC 33305 / BD413 / ADP1).